The following is a 655-amino-acid chain: Very long-chain specific acyl-CoA dehydrogenase, mitochondrial (655 aa).

The N-terminal 40 residues, 1–40, are a transit peptide targeting the mitochondrion; it reads MQAARMAASLGRQLLRLGGGSSRLTALLGQPRPGPARRPY. The tract at residues 23 to 42 is disordered; sequence RLTALLGQPRPGPARRPYAG. The segment at 41-482 is catalytic; that stretch reads AGGAAQLALD…ALQGCMDKGK (442 aa). The residue at position 51 (K51) is an N6-acetyllysine. K71 is subject to N6-acetyllysine; alternate. K71 bears the N6-succinyllysine; alternate mark. Residue K195 is modified to N6-succinyllysine. Position 214 to 223 (214 to 223) interacts with FAD; that stretch reads FCLTEPSSGS. C237 bears the S-nitrosocysteine mark. Residue K239 is modified to N6-acetyllysine; alternate. Residue K239 is modified to N6-succinyllysine; alternate. Position 249 to 251 (249 to 251) interacts with FAD; that stretch reads WIS. 2 positions are modified to N6-acetyllysine; alternate: K276 and K278. N6-succinyllysine; alternate is present on residues K276 and K278. An N6-acetyllysine modification is found at K298. An N6-acetyllysine; alternate modification is found at K331. K331 carries the N6-succinyllysine; alternate modification. K372 is modified (N6-succinyllysine). Substrate is bound at residue 461–463; sequence FEG. The Proton acceptor role is filled by E462. 464–466 serves as a coordination point for FAD; that stretch reads TND. Position 482 is an N6-acetyllysine; alternate (K482). K482 is modified (N6-succinyllysine; alternate). Residues 483–516 are membrane-anchoring; it reads ELSGLGSALKNPFGNAGLLLGEAGKQLRRRAGLG. Phosphoserine occurs at positions 517 and 522. Position 550 is an N6-acetyllysine (K550). K556 is modified (N6-acetyllysine; alternate). K556 is modified (N6-succinyllysine; alternate). Q562 lines the FAD pocket. N6-succinyllysine is present on K639.

This sequence belongs to the acyl-CoA dehydrogenase family. As to quaternary structure, homodimer. Homodimerizes after import into the mitochondrion. The cofactor is FAD. In terms of processing, S-nitrosylation at Cys-237 in liver improves catalytic efficiency. In terms of tissue distribution, predominantly expressed in heart and skeletal muscle (at protein level). Also detected in kidney and liver (at protein level).

It localises to the mitochondrion inner membrane. The catalysed reaction is a very-long-chain 2,3-saturated fatty acyl-CoA + oxidized [electron-transfer flavoprotein] + H(+) = a very-long-chain (2E)-enoyl-CoA + reduced [electron-transfer flavoprotein]. It catalyses the reaction decanoyl-CoA + oxidized [electron-transfer flavoprotein] + H(+) = (2E)-decenoyl-CoA + reduced [electron-transfer flavoprotein]. The enzyme catalyses dodecanoyl-CoA + oxidized [electron-transfer flavoprotein] + H(+) = (2E)-dodecenoyl-CoA + reduced [electron-transfer flavoprotein]. It carries out the reaction tetradecanoyl-CoA + oxidized [electron-transfer flavoprotein] + H(+) = (2E)-tetradecenoyl-CoA + reduced [electron-transfer flavoprotein]. The catalysed reaction is oxidized [electron-transfer flavoprotein] + hexadecanoyl-CoA + H(+) = (2E)-hexadecenoyl-CoA + reduced [electron-transfer flavoprotein]. It catalyses the reaction octadecanoyl-CoA + oxidized [electron-transfer flavoprotein] + H(+) = (2E)-octadecenoyl-CoA + reduced [electron-transfer flavoprotein]. The enzyme catalyses eicosanoyl-CoA + oxidized [electron-transfer flavoprotein] + H(+) = (2E)-eicosenoyl-CoA + reduced [electron-transfer flavoprotein]. It carries out the reaction docosanoyl-CoA + oxidized [electron-transfer flavoprotein] + H(+) = (2E)-docosenoyl-CoA + reduced [electron-transfer flavoprotein]. The catalysed reaction is tetracosanoyl-CoA + oxidized [electron-transfer flavoprotein] + H(+) = (2E)-tetracosenoyl-CoA + reduced [electron-transfer flavoprotein]. It catalyses the reaction (9Z)-hexadecenoyl-CoA + oxidized [electron-transfer flavoprotein] + H(+) = (2E,9Z)-hexadecadienoyl-CoA + reduced [electron-transfer flavoprotein]. The enzyme catalyses oxidized [electron-transfer flavoprotein] + (9Z)-octadecenoyl-CoA + H(+) = (2E,9Z)-octadecadienoyl-CoA + reduced [electron-transfer flavoprotein]. The protein operates within lipid metabolism; mitochondrial fatty acid beta-oxidation. Its function is as follows. Very long-chain specific acyl-CoA dehydrogenase is one of the acyl-CoA dehydrogenases that catalyze the first step of mitochondrial fatty acid beta-oxidation, an aerobic process breaking down fatty acids into acetyl-CoA and allowing the production of energy from fats. The first step of fatty acid beta-oxidation consists in the removal of one hydrogen from C-2 and C-3 of the straight-chain fatty acyl-CoA thioester, resulting in the formation of trans-2-enoyl-CoA. Among the different mitochondrial acyl-CoA dehydrogenases, very long-chain specific acyl-CoA dehydrogenase acts specifically on acyl-CoAs with saturated 12 to 24 carbons long primary chains. This Homo sapiens (Human) protein is Very long-chain specific acyl-CoA dehydrogenase, mitochondrial.